The sequence spans 279 residues: Shikimate dehydrogenase (NADP(+)) (279 aa).

Shikimate contacts are provided by residues 21–23 (SKS) and threonine 68. Catalysis depends on lysine 72, which acts as the Proton acceptor. Residue glutamate 84 coordinates NADP(+). Positions 93 and 109 each coordinate shikimate. Residues 133-137 (GAGGA), 157-162 (NRTQAK), and methionine 220 each bind NADP(+). Tyrosine 222 lines the shikimate pocket. Position 244 (glycine 244) interacts with NADP(+).

Belongs to the shikimate dehydrogenase family. Homodimer.

It catalyses the reaction shikimate + NADP(+) = 3-dehydroshikimate + NADPH + H(+). It functions in the pathway metabolic intermediate biosynthesis; chorismate biosynthesis; chorismate from D-erythrose 4-phosphate and phosphoenolpyruvate: step 4/7. In terms of biological role, involved in the biosynthesis of the chorismate, which leads to the biosynthesis of aromatic amino acids. Catalyzes the reversible NADPH linked reduction of 3-dehydroshikimate (DHSA) to yield shikimate (SA). The polypeptide is Shikimate dehydrogenase (NADP(+)) (Shewanella halifaxensis (strain HAW-EB4)).